The primary structure comprises 164 residues: ATP synthase subunit b (164 aa).

A helical transmembrane segment spans residues 6 to 26; the sequence is GELVGNFILVTGSVIVLLLLI.

Belongs to the ATPase B chain family. As to quaternary structure, F-type ATPases have 2 components, F(1) - the catalytic core - and F(0) - the membrane proton channel. F(1) has five subunits: alpha(3), beta(3), gamma(1), delta(1), epsilon(1). F(0) has three main subunits: a(1), b(2) and c(10-14). The alpha and beta chains form an alternating ring which encloses part of the gamma chain. F(1) is attached to F(0) by a central stalk formed by the gamma and epsilon chains, while a peripheral stalk is formed by the delta and b chains.

It localises to the cell membrane. Functionally, f(1)F(0) ATP synthase produces ATP from ADP in the presence of a proton or sodium gradient. F-type ATPases consist of two structural domains, F(1) containing the extramembraneous catalytic core and F(0) containing the membrane proton channel, linked together by a central stalk and a peripheral stalk. During catalysis, ATP synthesis in the catalytic domain of F(1) is coupled via a rotary mechanism of the central stalk subunits to proton translocation. In terms of biological role, component of the F(0) channel, it forms part of the peripheral stalk, linking F(1) to F(0). The sequence is that of ATP synthase subunit b from Streptococcus pyogenes serotype M3 (strain ATCC BAA-595 / MGAS315).